A 91-amino-acid polypeptide reads, in one-letter code: UPF0335 protein BBta_6866 (91 aa).

It belongs to the UPF0335 family.

This chain is UPF0335 protein BBta_6866, found in Bradyrhizobium sp. (strain BTAi1 / ATCC BAA-1182).